A 669-amino-acid chain; its full sequence is CoB--CoM heterodisulfide reductase iron-sulfur subunit A 1 (669 aa).

153-176 (GGGIAGIQAALDLADQGFKVYLVE) lines the FAD pocket. Position 200 (selenocysteine 200) is a non-standard amino acid, selenocysteine. 4Fe-4S ferredoxin-type domains are found at residues 239 to 270 (KKPR…FDLG), 287 to 318 (LVYT…FDQE), 584 to 613 (ITAT…MVEK), and 617 to 646 (RVAE…LRYY). [4Fe-4S] cluster-binding residues include cysteine 249, cysteine 252, cysteine 255, cysteine 259, cysteine 296, cysteine 299, cysteine 302, cysteine 306, cysteine 593, cysteine 596, cysteine 599, cysteine 603, cysteine 626, cysteine 629, cysteine 632, and cysteine 636.

This sequence belongs to the HdrA family. As to quaternary structure, the ferredoxin:CoB-CoM heterodisulfide reductase is composed of three subunits; HdrA, HdrB and HdrC. The cofactor is [4Fe-4S] cluster. Requires FAD as cofactor.

Its pathway is cofactor metabolism; coenzyme M-coenzyme B heterodisulfide reduction; coenzyme B and coenzyme M from coenzyme M-coenzyme B heterodisulfide: step 1/1. Its function is as follows. Part of a complex that catalyzes the reversible reduction of CoM-S-S-CoB to the thiol-coenzymes H-S-CoM (coenzyme M) and H-S-CoB (coenzyme B). The sequence is that of CoB--CoM heterodisulfide reductase iron-sulfur subunit A 1 (hdrA1) from Methanopyrus kandleri (strain AV19 / DSM 6324 / JCM 9639 / NBRC 100938).